The following is a 230-amino-acid chain: UPF0758 protein Glov_0523 (230 aa).

The 123-residue stretch at 108-230 (RFTSPAQVFD…YFSFVESGLL (123 aa)) folds into the MPN domain. Zn(2+) is bound by residues His179, His181, and Asp192. A JAMM motif motif is present at residues 179–192 (HNHPSGDPAPSRED).

It belongs to the UPF0758 family.

In Trichlorobacter lovleyi (strain ATCC BAA-1151 / DSM 17278 / SZ) (Geobacter lovleyi), this protein is UPF0758 protein Glov_0523.